A 632-amino-acid polypeptide reads, in one-letter code: Chaperone protein DnaK (632 aa).

Residue Thr198 is modified to Phosphothreonine; by autocatalysis.

The protein belongs to the heat shock protein 70 family.

In terms of biological role, acts as a chaperone. The chain is Chaperone protein DnaK from Rhodopseudomonas palustris (strain BisB18).